Here is a 328-residue protein sequence, read N- to C-terminus: Ribosomal RNA large subunit methyltransferase F (328 aa).

Positions 1-31 (MTDTRKPPRKKPQRPAKPAAPREKATLHPRN) are disordered.

The protein belongs to the methyltransferase superfamily. METTL16/RlmF family.

Its subcellular location is the cytoplasm. It catalyses the reaction adenosine(1618) in 23S rRNA + S-adenosyl-L-methionine = N(6)-methyladenosine(1618) in 23S rRNA + S-adenosyl-L-homocysteine + H(+). In terms of biological role, specifically methylates the adenine in position 1618 of 23S rRNA. This Pseudomonas savastanoi pv. phaseolicola (strain 1448A / Race 6) (Pseudomonas syringae pv. phaseolicola (strain 1448A / Race 6)) protein is Ribosomal RNA large subunit methyltransferase F.